Consider the following 224-residue polypeptide: Orotate phosphoribosyltransferase (224 aa).

Residue lysine 29 participates in 5-phospho-alpha-D-ribose 1-diphosphate binding. 37–38 (FF) is an orotate binding site. Residues 75–76 (YK), arginine 105, lysine 106, lysine 109, histidine 111, and 130–138 (DDVITAGTS) contribute to the 5-phospho-alpha-D-ribose 1-diphosphate site. Positions 134 and 162 each coordinate orotate.

Belongs to the purine/pyrimidine phosphoribosyltransferase family. PyrE subfamily. In terms of assembly, homodimer. It depends on Mg(2+) as a cofactor.

It catalyses the reaction orotidine 5'-phosphate + diphosphate = orotate + 5-phospho-alpha-D-ribose 1-diphosphate. It functions in the pathway pyrimidine metabolism; UMP biosynthesis via de novo pathway; UMP from orotate: step 1/2. Its function is as follows. Catalyzes the transfer of a ribosyl phosphate group from 5-phosphoribose 1-diphosphate to orotate, leading to the formation of orotidine monophosphate (OMP). This chain is Orotate phosphoribosyltransferase, found in Bordetella bronchiseptica (strain ATCC BAA-588 / NCTC 13252 / RB50) (Alcaligenes bronchisepticus).